The chain runs to 127 residues: Cold-regulated protein 1 (127 aa).

Residues 39 to 127 are disordered; sequence ARGPPPSPAP…WTRPRMARAR (89 aa). Basic residues predominate over residues 85 to 101; it reads SRRRRRRRATRRARSRM. The segment covering 102–121 has biased composition (low complexity); it reads PRTTPWRAPRAPARAWWTRP.

This chain is Cold-regulated protein 1, found in Hordeum vulgare (Barley).